The sequence spans 222 residues: Thiamine-phosphate synthase (222 aa).

4-amino-2-methyl-5-(diphosphooxymethyl)pyrimidine-binding positions include 44 to 48 (QFREK) and Asn79. Positions 80 and 99 each coordinate Mg(2+). Ser117 contacts 4-amino-2-methyl-5-(diphosphooxymethyl)pyrimidine. 2-[(2R,5Z)-2-carboxy-4-methylthiazol-5(2H)-ylidene]ethyl phosphate is bound at residue 143-145 (TET). Residue Lys146 participates in 4-amino-2-methyl-5-(diphosphooxymethyl)pyrimidine binding. 2-[(2R,5Z)-2-carboxy-4-methylthiazol-5(2H)-ylidene]ethyl phosphate contacts are provided by residues Gly175 and 195–196 (IS).

Belongs to the thiamine-phosphate synthase family. As to quaternary structure, monomer. It depends on Mg(2+) as a cofactor.

It carries out the reaction 2-[(2R,5Z)-2-carboxy-4-methylthiazol-5(2H)-ylidene]ethyl phosphate + 4-amino-2-methyl-5-(diphosphooxymethyl)pyrimidine + 2 H(+) = thiamine phosphate + CO2 + diphosphate. The catalysed reaction is 2-(2-carboxy-4-methylthiazol-5-yl)ethyl phosphate + 4-amino-2-methyl-5-(diphosphooxymethyl)pyrimidine + 2 H(+) = thiamine phosphate + CO2 + diphosphate. The enzyme catalyses 4-methyl-5-(2-phosphooxyethyl)-thiazole + 4-amino-2-methyl-5-(diphosphooxymethyl)pyrimidine + H(+) = thiamine phosphate + diphosphate. It participates in cofactor biosynthesis; thiamine diphosphate biosynthesis; thiamine phosphate from 4-amino-2-methyl-5-diphosphomethylpyrimidine and 4-methyl-5-(2-phosphoethyl)-thiazole: step 1/1. Condenses 4-methyl-5-(beta-hydroxyethyl)thiazole monophosphate (THZ-P) and 2-methyl-4-amino-5-hydroxymethyl pyrimidine pyrophosphate (HMP-PP) to form thiamine monophosphate (TMP). Is also able to use the 2-methoxy analog MeO-HMP-PP, as substrate in vitro, but not the 2-trifluoromethyl analog CF(3)-HMP-PP. In Bacillus subtilis (strain 168), this protein is Thiamine-phosphate synthase (thiE).